Here is a 284-residue protein sequence, read N- to C-terminus: Kynurenine formamidase avaC (284 aa).

Positions 47-51 match the HGGXW motif; it reads HGGGW. The Nucleophile role is filled by S130.

It belongs to the kynurenine formamidase family.

The catalysed reaction is N-formyl-L-kynurenine + H2O = L-kynurenine + formate + H(+). Its pathway is secondary metabolite metabolism. Its function is as follows. Kynurenine formamidase; part of the cluster that mediates the biosynthesis of a highly modified cyclo-arginine-tryptophan dipeptide (cRW). Within the pathway, avaC catalyzes the deformylation of the cyclo-Arg-formylkynurenine iketopiperazine (DKP), produced by the FAD-dependent monooxygenase avaB. The first step of the pathway is perfornmed by the arginine-containing cyclodipeptide synthase (RCPDS) avaA that acts as the scaffold-generating enzyme and is responsible for formation of the cyclo-Arg-Trp (cRW) diketopiperazine. AvaB then acts as a multifunctional flavoenzyme that is responsible for generating the cyclo-Arg-formylkynurenine DKP, which can be deformylated by avaC. AvaB then further catalyzes an additional N-oxidation followed by cyclization and dehydration. The next step is an N-acetylation of the guanidine group catalyzed by the arginine N-acetyltransferase avaD. The roles of the additional enzymes identified within the ava cluster still have to be determined. The polypeptide is Kynurenine formamidase avaC (Aspergillus versicolor).